A 299-amino-acid chain; its full sequence is Glycine--tRNA ligase alpha subunit (299 aa).

It belongs to the class-II aminoacyl-tRNA synthetase family. In terms of assembly, tetramer of two alpha and two beta subunits.

The protein localises to the cytoplasm. The catalysed reaction is tRNA(Gly) + glycine + ATP = glycyl-tRNA(Gly) + AMP + diphosphate. The polypeptide is Glycine--tRNA ligase alpha subunit (Dichelobacter nodosus (strain VCS1703A)).